A 109-amino-acid chain; its full sequence is Putative pterin-4-alpha-carbinolamine dehydratase (109 aa).

This sequence belongs to the pterin-4-alpha-carbinolamine dehydratase family.

It catalyses the reaction (4aS,6R)-4a-hydroxy-L-erythro-5,6,7,8-tetrahydrobiopterin = (6R)-L-erythro-6,7-dihydrobiopterin + H2O. The chain is Putative pterin-4-alpha-carbinolamine dehydratase from Rickettsia canadensis (strain McKiel).